Reading from the N-terminus, the 490-residue chain is Histone-lysine N-methyltransferase Smyd1 (490 aa).

Positions glutamate 7–isoleucine 253 constitute an SET domain. Residue lysine 17 to arginine 19 participates in S-adenosyl-L-methionine binding. Zn(2+) contacts are provided by cysteine 52, cysteine 55, cysteine 65, cysteine 68, cysteine 74, cysteine 78, histidine 86, and cysteine 90. An MYND-type zinc finger spans residues cysteine 52 to cysteine 90. S-adenosyl-L-methionine contacts are provided by residues histidine 135 and asparagine 205–histidine 206. Cysteine 208 serves as a coordination point for Zn(2+). An S-adenosyl-L-methionine-binding site is contributed by tyrosine 270–phenylalanine 272. The Zn(2+) site is built by cysteine 274, cysteine 276, and cysteine 279.

The protein belongs to the class V-like SAM-binding methyltransferase superfamily. In terms of assembly, interacts with HDAC1, HDAC2 and HDAC3. Interacts (via MYND-type zinc finger) with NACA isoform skNAC. As to expression, expressed in cardiac and skeletal muscle, lymphocytes and thymus.

Its subcellular location is the cytoplasm. The protein resides in the nucleus. The catalysed reaction is L-lysyl(4)-[histone H3] + 3 S-adenosyl-L-methionine = N(6),N(6),N(6)-trimethyl-L-lysyl(4)-[histone H3] + 3 S-adenosyl-L-homocysteine + 3 H(+). Its function is as follows. Methylates histone H3 at 'Lys-4' (H3K4me). Acts as a transcriptional repressor. Essential for cardiomyocyte differentiation and cardiac morphogenesis. This is Histone-lysine N-methyltransferase Smyd1 (Smyd1) from Mus musculus (Mouse).